Here is a 190-residue protein sequence, read N- to C-terminus: MKVKKLVVVSMLSSIAFVLMLLNFPFPGLPDYLKIDFSDVPAIIAILIYGPLAGIAVEAIKNVLQYIIQGSMAGVPVGQVANFIAGTLFILPTAFLFKKLNSAKGLAVSLLLGTAAMTILMSILNYVLILPAYTWFLHSPALSDSALKTAVVAGILPFNMIKGIVITVVFSLIFIKLKPWIEQQRSAHIH.

Residues 1 to 5 (MKVKK) are Extracellular-facing. A helical membrane pass occupies residues 6 to 26 (LVVVSMLSSIAFVLMLLNFPF). Residues 27–39 (PGLPDYLKIDFSD) are Cytoplasmic-facing. A helical transmembrane segment spans residues 40 to 60 (VPAIIAILIYGPLAGIAVEAI). The Extracellular segment spans residues 61 to 76 (KNVLQYIIQGSMAGVP). A helical transmembrane segment spans residues 77–97 (VGQVANFIAGTLFILPTAFLF). At 98-109 (KKLNSAKGLAVS) the chain is on the cytoplasmic side. Residues 110–130 (LLLGTAAMTILMSILNYVLIL) form a helical membrane-spanning segment. The Extracellular portion of the chain corresponds to 131-154 (PAYTWFLHSPALSDSALKTAVVAG). Residues 155-175 (ILPFNMIKGIVITVVFSLIFI) form a helical membrane-spanning segment. Residues 176 to 190 (KLKPWIEQQRSAHIH) are Cytoplasmic-facing.

It belongs to the prokaryotic riboflavin transporter (P-RFT) (TC 2.A.87) family. As to quaternary structure, forms a stable energy-coupling factor (ECF) transporter complex composed of a membrane-embedded substrate-binding protein (S component), 2 ATP-binding proteins (A component) and 2 transmembrane proteins (T component). May be able to interact with more than 1 S component at a time.

Its subcellular location is the cell membrane. With respect to regulation, inhibited by excess of riboflavin or FMN. Also inhibited by protonophores such as CCCP and FCCP or in the absence of glucose. Its function is as follows. Mediates uptake of riboflavin and roseoflavin, a toxic riboflavin analog; may also transport FMN. Probably a riboflavin-binding protein that interacts with the energy-coupling factor (ECF) ABC-transporter complex. Unlike classic ABC transporters this ECF transporter provides the energy necessary to transport a number of different substrates. The substrates themselves are bound by transmembrane, not extracytoplasmic soluble proteins. The sequence is that of Riboflavin transporter FmnP (fmnP) from Bacillus subtilis (strain 168).